Reading from the N-terminus, the 203-residue chain is uncharacterized protein (203 aa).

This is an uncharacterized protein from Chlorobium limicola.